The following is a 202-amino-acid chain: MLSDELKLLVGLGNPGTEYEKTRHNVGFMVLEEIARKNNCSFRESKKIFGRTCEYGSGIEKTRLLMPNTYMNESGKSVRLAKDWFNFQNNQLIVLVDDMDLPLGKIRVRSKGSSGGHNGLKSIINHLGTAEFKRLKIGIGAPSNDQQERKSKTVSHVLGRFSKEEFIILNFIIQEIISCIESITSNNWEKISTRLNSYKPDN.

TRNA is bound at residue tyrosine 19. The active-site Proton acceptor is histidine 24. Residues tyrosine 70, asparagine 72, and asparagine 118 each contribute to the tRNA site.

This sequence belongs to the PTH family. In terms of assembly, monomer.

The protein resides in the cytoplasm. The catalysed reaction is an N-acyl-L-alpha-aminoacyl-tRNA + H2O = an N-acyl-L-amino acid + a tRNA + H(+). Hydrolyzes ribosome-free peptidyl-tRNAs (with 1 or more amino acids incorporated), which drop off the ribosome during protein synthesis, or as a result of ribosome stalling. Its function is as follows. Catalyzes the release of premature peptidyl moieties from peptidyl-tRNA molecules trapped in stalled 50S ribosomal subunits, and thus maintains levels of free tRNAs and 50S ribosomes. This chain is Peptidyl-tRNA hydrolase, found in Prochlorococcus marinus (strain NATL1A).